We begin with the raw amino-acid sequence, 235 residues long: Isoprenyl transferase (235 aa).

Asp-21 is an active-site residue. Asp-21 contributes to the Mg(2+) binding site. Substrate-binding positions include 22-25 (GNAR), Trp-26, Lys-34, His-38, and 66-68 (SSE). Residue Asn-69 is the Proton acceptor of the active site. Substrate-binding positions include Trp-70, Arg-72, Arg-183, and 189-191 (RIS). Position 202 (Glu-202) interacts with Mg(2+).

Belongs to the UPP synthase family. As to quaternary structure, homodimer. Mg(2+) serves as cofactor.

Functionally, catalyzes the condensation of isopentenyl diphosphate (IPP) with allylic pyrophosphates generating different type of terpenoids. This Rickettsia conorii (strain ATCC VR-613 / Malish 7) protein is Isoprenyl transferase.